Consider the following 396-residue polypeptide: 1-deoxy-D-xylulose 5-phosphate reductoisomerase (396 aa).

Thr-14, Gly-15, Ser-16, Ile-17, Gly-40, and Asn-128 together coordinate NADPH. Lys-129 contributes to the 1-deoxy-D-xylulose 5-phosphate binding site. Glu-130 is a binding site for NADPH. Residue Asp-154 coordinates Mn(2+). 1-deoxy-D-xylulose 5-phosphate contacts are provided by Ser-155, Glu-156, Ser-180, and His-203. Glu-156 provides a ligand contact to Mn(2+). NADPH is bound at residue Gly-209. 1-deoxy-D-xylulose 5-phosphate contacts are provided by Ser-216, Asn-221, Lys-222, and Glu-225. Mn(2+) is bound at residue Glu-225.

The protein belongs to the DXR family. Requires Mg(2+) as cofactor. It depends on Mn(2+) as a cofactor.

The catalysed reaction is 2-C-methyl-D-erythritol 4-phosphate + NADP(+) = 1-deoxy-D-xylulose 5-phosphate + NADPH + H(+). It participates in isoprenoid biosynthesis; isopentenyl diphosphate biosynthesis via DXP pathway; isopentenyl diphosphate from 1-deoxy-D-xylulose 5-phosphate: step 1/6. Catalyzes the NADPH-dependent rearrangement and reduction of 1-deoxy-D-xylulose-5-phosphate (DXP) to 2-C-methyl-D-erythritol 4-phosphate (MEP). This is 1-deoxy-D-xylulose 5-phosphate reductoisomerase from Xylella fastidiosa (strain 9a5c).